Reading from the N-terminus, the 94-residue chain is Small ribosomal subunit protein bS18 (94 aa).

It belongs to the bacterial ribosomal protein bS18 family. Part of the 30S ribosomal subunit. Forms a tight heterodimer with protein bS6.

Functionally, binds as a heterodimer with protein bS6 to the central domain of the 16S rRNA, where it helps stabilize the platform of the 30S subunit. The polypeptide is Small ribosomal subunit protein bS18 (Polaromonas naphthalenivorans (strain CJ2)).